Consider the following 642-residue polypeptide: Threonine--tRNA ligase (642 aa).

One can recognise a TGS domain in the interval 1–61; it reads MPVITLPDGS…DTDAQLAIIT (61 aa). The catalytic stretch occupies residues 243–534; the sequence is DHRKIGKQLD…LTEEFAGFFP (292 aa). Zn(2+)-binding residues include cysteine 334, histidine 385, and histidine 511.

Belongs to the class-II aminoacyl-tRNA synthetase family. Homodimer. Requires Zn(2+) as cofactor.

Its subcellular location is the cytoplasm. The catalysed reaction is tRNA(Thr) + L-threonine + ATP = L-threonyl-tRNA(Thr) + AMP + diphosphate + H(+). In terms of biological role, catalyzes the attachment of threonine to tRNA(Thr) in a two-step reaction: L-threonine is first activated by ATP to form Thr-AMP and then transferred to the acceptor end of tRNA(Thr). Also edits incorrectly charged L-seryl-tRNA(Thr). The polypeptide is Threonine--tRNA ligase (Pectobacterium carotovorum subsp. carotovorum (strain PC1)).